The primary structure comprises 749 residues: Meiotically up-regulated gene 122 protein (749 aa).

Over 1–20 (MYRKWDLCITRHLLPYIEHS) the chain is Cytoplasmic. Residues 21–41 (VIPIIALLVLSLIFYILYICF) traverse the membrane as a helical; Signal-anchor for type II membrane protein segment. Topologically, residues 42-749 (GTTSYILSGI…LLSNALRSII (708 aa)) are lumenal. One can recognise a PXA domain in the interval 88–261 (PPELEAPLQL…CIILYFSSSE (174 aa)). One can recognise a PX domain in the interval 311 to 422 (LHYQFLKEAS…KFFAKSMRSH (112 aa)). Disordered stretches follow at residues 439–489 (QSSS…LSQQ) and 504–546 (GSCT…PPKP). Polar residues-rich tracts occupy residues 440–461 (SSSV…NKTS) and 475–489 (LSHQ…LSQQ).

This sequence belongs to the sorting nexin family.

The protein resides in the endoplasmic reticulum membrane. Has a role in meiosis. In Schizosaccharomyces pombe (strain 972 / ATCC 24843) (Fission yeast), this protein is Meiotically up-regulated gene 122 protein (mug122).